The sequence spans 206 residues: Synaptosomal-associated protein 25 (206 aa).

Residues 1–20 (MAEDADMRNELEEMQRRADQ) show a composition bias toward basic and acidic residues. The interval 1 to 23 (MAEDADMRNELEEMQRRADQLAD) is disordered. Residues 19-81 (DQLADESLES…KEAEKNLTDL (63 aa)) enclose the t-SNARE coiled-coil homology 1 domain. Residues Cys85, Cys88, Cys90, and Cys92 are each lipidated (S-palmitoyl cysteine). The residue at position 138 (Thr138) is a Phosphothreonine. The t-SNARE coiled-coil homology 2 domain occupies 140 to 202 (DARENEMDEN…DEANQRATKM (63 aa)). Position 187 is a phosphoserine (Ser187).

This sequence belongs to the SNAP-25 family. In terms of assembly, part of the SNARE core complex containing SNAP25, VAMP2 and STX1A. This complex binds CPLX1. Interacts with TRIM9, RIMS1 and SNAPIN. Binds STXBP6. Found in a ternary complex with STX1A and VAMP8. Associates with the BLOC-1 complex. Isoform 1 and isoform 2 interact with BLOC1S6. Interacts with alpha-synuclein/SNCA. Palmitoylated. Cys-85 appears to be the main site, and palmitoylation is required for membrane association.

Its subcellular location is the membrane. The protein resides in the synapse. It localises to the synaptosome. The protein localises to the cell membrane. T-SNARE involved in the molecular regulation of neurotransmitter release. May play an important role in the synaptic function of specific neuronal systems. Associates with proteins involved in vesicle docking and membrane fusion. The protein is Synaptosomal-associated protein 25 (SNAP25) of Gallus gallus (Chicken).